We begin with the raw amino-acid sequence, 476 residues long: Glycogen synthase (476 aa).

Lys15 contacts ADP-alpha-D-glucose.

The protein belongs to the glycosyltransferase 1 family. Bacterial/plant glycogen synthase subfamily.

It carries out the reaction [(1-&gt;4)-alpha-D-glucosyl](n) + ADP-alpha-D-glucose = [(1-&gt;4)-alpha-D-glucosyl](n+1) + ADP + H(+). Its pathway is glycan biosynthesis; glycogen biosynthesis. Its function is as follows. Synthesizes alpha-1,4-glucan chains using ADP-glucose. The polypeptide is Glycogen synthase (Streptococcus equi subsp. zooepidemicus (strain H70)).